The chain runs to 161 residues: Ribonuclease P protein component 2 (161 aa).

The protein belongs to the eukaryotic/archaeal RNase P protein component 2 family. As to quaternary structure, consists of a catalytic RNA component and at least 4-5 protein subunits.

It localises to the cytoplasm. The catalysed reaction is Endonucleolytic cleavage of RNA, removing 5'-extranucleotides from tRNA precursor.. Part of ribonuclease P, a protein complex that generates mature tRNA molecules by cleaving their 5'-ends. The chain is Ribonuclease P protein component 2 from Methanopyrus kandleri (strain AV19 / DSM 6324 / JCM 9639 / NBRC 100938).